Consider the following 1458-residue polypeptide: Secretory phospholipase A2 receptor (1458 aa).

A signal peptide spans 1-23; sequence MLLSLLLLLLLGAPRRCTEGAAA. Over 24–1393 the chain is Extracellular; that stretch reads ALSPERVLKW…EHPGKGPSHS (1370 aa). 17 disulfide bridges follow: Cys-49/Cys-62, Cys-87/Cys-104, Cys-176/Cys-202, Cys-190/Cys-217, Cys-258/Cys-352, Cys-328/Cys-344, Cys-404/Cys-499, Cys-476/Cys-491, Cys-615/Cys-632, Cys-697/Cys-794, Cys-772/Cys-786, Cys-838/Cys-935, Cys-912/Cys-927, Cys-1065/Cys-1085, Cys-1207/Cys-1221, Cys-1278/Cys-1373, and Cys-1350/Cys-1365. Residues 49-113 form the Ricin B-type lectin domain; the sequence is CIQAGKSVLT…CDSTHVSLRW (65 aa). N-linked (GlcNAc...) asparagine glycosylation is present at Asn-91. Positions 171 to 219 constitute a Fibronectin type-II domain; it reads AHGTPCMFPFQYNHQWHHECTREGRQDDSLWCATTSRYERDEKWGFCPD. C-type lectin domains follow at residues 227–356, 374–502, 511–645, 660–798, 815–939, 954–1098, 1117–1231, and 1243–1376; these read CDAV…KKYL, TDCE…CKKP, SGCQ…KQPV, HPCY…KIPR, LFHQ…KRKT, GTCP…EKIQ, LEYG…AICH, and ELCS…CKMK. 3 N-linked (GlcNAc...) asparagine glycosylation sites follow: Asn-408, Asn-431, and Asn-452. The chain crosses the membrane as a helical span at residues 1394–1416; the sequence is IVPLAVALTLVVILAIITLSFYI. Residues 1417 to 1458 are Cytoplasmic-facing; sequence YKQNKGFFRRLAGVGNSYYPTTNFSTIHLEENILISDLEKND. The short motif at 1432–1438 is the Endocytosis signal element; sequence NSYYPTT.

Interacts with sPLA2-IB/PLA2G1B; this interaction mediates intracellular signaling as well as clearance of extracellular sPLA2-IB/PLA2G1B via endocytotic pathway. Interacts with sPLA2-X/PLA2G10; this interaction mediates sPLA2-X/PLA2G10 clearance and inactivation. In terms of processing, the secretory phospholipase A2 receptor form may be produced by the action of metalloproteinases. It contains all extracellular domains and only lacks transmembrane and cytosolic regions. It is however unclear whether this form is produced by proteolytic cleavage as suggested by some experiments, or by alternative splicing. Lung, skeletal muscle, brain, kidney and heart.

The protein localises to the cell membrane. The protein resides in the secreted. Functionally, receptor for secretory phospholipase A2 (sPLA2). Also able to bind to snake PA2-like toxins. Although its precise function remains unclear, binding of sPLA2 to its receptor participates in both positive and negative regulation of sPLA2 functions as well as clearance of sPLA2. Binding of sPLA2-IB/PLA2G1B induces various effects depending on the cell type, such as activation of the mitogen-activated protein kinase (MAPK) cascade to induce cell proliferation, the production of lipid mediators, selective release of arachidonic acid in bone marrow-derived mast cells. In neutrophils, binding of sPLA2-IB/PLA2G1B can activate p38 MAPK to stimulate elastase release and cell adhesion. May be involved in responses in pro-inflammatory cytokine productions during endotoxic shock. Also has endocytic properties and rapidly internalizes sPLA2 ligands, which is particularly important for the clearance of extracellular sPLA2s to protect their potent enzymatic activities. The soluble secretory phospholipase A2 receptor form is circulating and acts as a negative regulator of sPLA2 functions by blocking the biological functions of sPLA2-IB/PLA2G1B and sPLA2-X/PLA2G10. This Oryctolagus cuniculus (Rabbit) protein is Secretory phospholipase A2 receptor (PLA2R1).